We begin with the raw amino-acid sequence, 449 residues long: Probable multidrug resistance protein NorM (449 aa).

Transmembrane regions (helical) follow at residues 17–39 (LMWP…TIMA), 54–76 (VGLW…PLVA), 97–119 (VAVS…LPIL), 129–151 (AGLF…ALRG), 164–186 (VISL…GIGP), 196–215 (GFAT…SYIY), 243–265 (LGLP…AIVL), 280–302 (MSVT…IRVG), 315–337 (LVQK…LIWF), 352–369 (VFDI…YQLM), 390–412 (MWIT…ARVA), and 417–439 (AGVW…MRLY).

This sequence belongs to the multi antimicrobial extrusion (MATE) (TC 2.A.66.1) family.

Its subcellular location is the cell inner membrane. Its function is as follows. Multidrug efflux pump. In Acinetobacter baylyi (strain ATCC 33305 / BD413 / ADP1), this protein is Probable multidrug resistance protein NorM (norM).